The following is a 323-amino-acid chain: RNA polymerase II holoenzyme cyclin-like subunit (323 aa).

A Cyclin N-terminal domain is found at 45-176 (DSKQNGIEQS…LLEELESYLI (132 aa)).

The protein belongs to the cyclin family. Cyclin C subfamily. In terms of assembly, component of the SRB8-11 complex which consists of SRB8, SSN2/SRB9, SSN3/SRB10 and SSN8/SRB11. The SRB8-11 complex associates with the Mediator complex. The SSN3/SRB10 and SSN8/SRB11 kinase-cyclin pair also associate with the RNA polymerase II holoenzyme. Interacts with ASK10.

It is found in the nucleus. Its function is as follows. Component of the SRB8-11 complex. The SRB8-11 complex is a regulatory module of the Mediator complex which is itself involved in regulation of basal and activated RNA polymerase II-dependent transcription. The SRB8-11 complex may be involved in the transcriptional repression of a subset of genes regulated by Mediator. It may inhibit the association of the Mediator complex with RNA polymerase II to form the holoenzyme complex. The SRB8-11 complex phosphorylates the C-terminal domain (CTD) of the largest subunit of RNA polymerase II RPB1 at serines 2 and 5. The SSN3/SRB10 and SSN8/SRB11 kinase-cyclin pair may also positively and negatively regulate numerous transcriptional activators in response to changes in nutritional and physiological conditions. The sequence is that of RNA polymerase II holoenzyme cyclin-like subunit (SSN8) from Saccharomyces cerevisiae (strain ATCC 204508 / S288c) (Baker's yeast).